The chain runs to 317 residues: L-lactate dehydrogenase (317 aa).

NAD(+)-binding positions include Val-17, Asp-38, Lys-43, Tyr-69, and Gly-83–Ala-84. Positions 86 and 92 each coordinate substrate. NAD(+) contacts are provided by residues Ser-105, Ala-122 to Asn-124, and Ser-147. Substrate is bound at residue Asn-124 to Asp-127. Asp-152–Arg-155 contacts substrate. Beta-D-fructose 1,6-bisphosphate contacts are provided by Arg-157 and His-172. Residue His-179 is the Proton acceptor of the active site. Tyr-224 carries the phosphotyrosine modification. Thr-233 serves as a coordination point for substrate.

This sequence belongs to the LDH/MDH superfamily. LDH family. In terms of assembly, homotetramer.

Its subcellular location is the cytoplasm. It catalyses the reaction (S)-lactate + NAD(+) = pyruvate + NADH + H(+). Its pathway is fermentation; pyruvate fermentation to lactate; (S)-lactate from pyruvate: step 1/1. Allosterically activated by fructose 1,6-bisphosphate (FBP). Functionally, catalyzes the conversion of lactate to pyruvate. In Bacillus velezensis (strain DSM 23117 / BGSC 10A6 / LMG 26770 / FZB42) (Bacillus amyloliquefaciens subsp. plantarum), this protein is L-lactate dehydrogenase.